Consider the following 553-residue polypeptide: Ergothioneine transport permease/ergothioneine binding protein EgtU (553 aa).

The 180-residue stretch at 57 to 236 (LAQHFIIVAL…LFSVLADKFV (180 aa)) folds into the ABC transmembrane type-1 domain. Transmembrane regions (helical) follow at residues 61–81 (FIIV…IGVF), 98–118 (FLYT…IGVG), 122–142 (ALLV…YNAL), 182–202 (IAVV…AGGL), 219–239 (VAGS…VSVF), and 261–281 (VYTN…WLIP). The Periplasmic portion of the chain corresponds to 282-553 (RNAIEEKPLV…AKDFLERLGL (272 aa)). The segment at 288–549 (KPLVVATKPS…PKIVAKDFLE (262 aa)) is ergothioneine binding domain.

This sequence in the N-terminal section; belongs to the binding-protein-dependent transport system permease family. It in the C-terminal section; belongs to the OsmX family. As to quaternary structure, the complex is composed of two ATP-binding proteins (EgtV) and two transmembrane proteins (EgtU).

The protein resides in the cell inner membrane. Its function is as follows. Part of the ABC transporter complex EgtUV involved in the uptake of ergothioneine (EGT), a natural low-molecular weight (LMW) thiol antioxidant which protects H.pylori against bleach stress. Responsible for the translocation of the substrate across the membrane. Also contains a C-terminal periplasmic solute-binding domain (SBD) which binds to ergothioneine with low-micromolar affinity. Cannot bind the structurally similar compounds glycine betaine, choline, proline, carnitine or histidine. The polypeptide is Ergothioneine transport permease/ergothioneine binding protein EgtU (Helicobacter pylori (strain G27)).